A 315-amino-acid polypeptide reads, in one-letter code: Kinetochore protein SPC25 homolog (315 aa).

At Met-1 the chain carries N-acetylmethionine. Residues 57–91 (TAQSQVELMNLKADLREAEDELVKVLAVKTRKEAR) adopt a coiled-coil conformation. A disordered region spans residues 261-315 (APAISFSTDTNMSTPENKRSKVQVNRRQKRGSESPLLAPVSTSATRRSSRFKGKK). Residues 266–275 (FSTDTNMSTP) are compositionally biased toward polar residues. Basic residues predominate over residues 280–289 (SKVQVNRRQK).

This sequence belongs to the SPC25 family. In terms of assembly, component of the NDC80 complex, which consists of NDC80, NUF2, SPC24 and SPC25.

It is found in the chromosome. It localises to the centromere. Functionally, acts as a component of the essential kinetochore-associated NDC80 complex, which is required for chromosome segregation and spindle checkpoint activity to ensure proper cell division. The sequence is that of Kinetochore protein SPC25 homolog from Arabidopsis thaliana (Mouse-ear cress).